The sequence spans 185 residues: Threonylcarbamoyl-AMP synthase (185 aa).

A YrdC-like domain is found at 1-185; it reads MKNFEQVLKA…AKTSQILRQG (185 aa). Positions 163–185 are disordered; sequence ETSGRNKPSEIRDAKTSQILRQG. Basic and acidic residues predominate over residues 164 to 177; sequence TSGRNKPSEIRDAK.

This sequence belongs to the SUA5 family. TsaC subfamily.

It is found in the cytoplasm. The enzyme catalyses L-threonine + hydrogencarbonate + ATP = L-threonylcarbamoyladenylate + diphosphate + H2O. Required for the formation of a threonylcarbamoyl group on adenosine at position 37 (t(6)A37) in tRNAs that read codons beginning with adenine. Catalyzes the conversion of L-threonine, HCO(3)(-)/CO(2) and ATP to give threonylcarbamoyl-AMP (TC-AMP) as the acyladenylate intermediate, with the release of diphosphate. This Vibrio campbellii (strain ATCC BAA-1116) protein is Threonylcarbamoyl-AMP synthase.